The chain runs to 145 residues: Protein H2A.5 (145 aa).

Residues 118-145 (SPAAAEKEAKSQKAAAKSPKKKTAATKE) are disordered. Positions 135–138 (SPKK) match the SPKK motif motif. Residues 135–145 (SPKKKTAATKE) are compositionally biased toward basic residues.

Belongs to the histone H2A family. As to quaternary structure, the nucleosome is a histone octamer containing two molecules each of H2A, H2B, H3 and H4 assembled in one H3-H4 heterotetramer and two H2A-H2B heterodimers. The octamer wraps approximately 147 bp of DNA. In terms of tissue distribution, abundant in meristematic tissues.

Its subcellular location is the nucleus. It localises to the chromosome. In terms of biological role, core component of nucleosome. Nucleosomes wrap and compact DNA into chromatin, limiting DNA accessibility to the cellular machineries which require DNA as a template. Histones thereby play a central role in transcription regulation, DNA repair, DNA replication and chromosomal stability. DNA accessibility is regulated via a complex set of post-translational modifications of histones, also called histone code, and nucleosome remodeling. The sequence is that of Protein H2A.5 (H2A-2) from Triticum aestivum (Wheat).